Consider the following 915-residue polypeptide: MLRTIATKIFGSRNERILRRLNKIVKKINALEPSFEALSDDELKAKTDEFRQRLANGETLEQLMPEAFATVREASRRILGMRHFDVQLVGGMVLTNRNIAEMRTGEGKTLTATLPCYLNALTGKGVHVVTVNDYLARRDAETNRPLFEFLGMSVAVNVPGLDPEVKRDAYKADITYATNSELGFDYLRDNLAHSAQERFQRPLHYALVDEVDSILIDEARTPLIISGPAADSSELYIAINKLIPSLVEQEKEDSDEFQGSGDYSLDLKNKQANLTERGLEKCENWLVEQGLMRPEDSLYSASNLGLFHHISAALRAHTLFQRDVDYVVKDGEIVIVDEHTGRTMAGRRWSDGLHQAIEAKEGVKIQGENQTVASITYQNFFRLYEKLAGMTGTADTEAFEFQQIYGLETVVIPTNRPMIRDDKTDIMFENEQYKFDAIIEDIKDCIARHQPVLVGTASIEKSELLSAALDKAGIAHNVLNAKFHAQEAEIIANAGYPGAVTIATNMAGRGTDIVLGGNWKAEVAKLESPTEEQIEAIKVAWQQRHDEVMQAGGLHIIGTERHESRRIDNQLRGRSGRQGDPGSSRFYLSLDDALMRIYLNEGKLNMMRKMFTTAGEAMESKLLAKVIASAQAKVEAHNFDGRKNLLQYDDVANDQRHAIYEQRNVLLDNDDISETIDAIREDVFNSVIDEYIPPQSLEEQWKIPELEERLRTDFTLDLPVRQWLEDDNQLHEDTLRERIIDAAKAEYQRKEELAGSESMRSFEKGIMLQTLDELWKEHLSAMDYLRQGIHLRGYAQKDPKQEYKKESFQMFTEMLDALKLSVIRTLSRVRVRTQEEIEEAERQYQAAMAAQQQARQAPLPNAPASSEPTQGSELSPEEKVARVAAERHIGRNEPCPCGSGKKYKYCHGSRAKDHA.

Residues glutamine 87, 105-109 (GEGKT), and aspartate 512 each bind ATP. Over residues 849 to 864 (AAQQQARQAPLPNAPA) the composition is skewed to low complexity. A disordered region spans residues 849 to 915 (AAQQQARQAP…CHGSRAKDHA (67 aa)). A compositionally biased stretch (basic and acidic residues) spans 876-891 (PEEKVARVAAERHIGR). Residues cysteine 895, cysteine 897, cysteine 906, and histidine 907 each coordinate Zn(2+).

The protein belongs to the SecA family. In terms of assembly, monomer and homodimer. Part of the essential Sec protein translocation apparatus which comprises SecA, SecYEG and auxiliary proteins SecDF-YajC and YidC. The cofactor is Zn(2+).

Its subcellular location is the cell inner membrane. The protein resides in the cytoplasm. The catalysed reaction is ATP + H2O + cellular proteinSide 1 = ADP + phosphate + cellular proteinSide 2.. Its function is as follows. Part of the Sec protein translocase complex. Interacts with the SecYEG preprotein conducting channel. Has a central role in coupling the hydrolysis of ATP to the transfer of proteins into and across the cell membrane, serving both as a receptor for the preprotein-SecB complex and as an ATP-driven molecular motor driving the stepwise translocation of polypeptide chains across the membrane. The sequence is that of Protein translocase subunit SecA from Actinobacillus succinogenes (strain ATCC 55618 / DSM 22257 / CCUG 43843 / 130Z).